We begin with the raw amino-acid sequence, 270 residues long: 3-phenylpropionate-dihydrodiol/cinnamic acid-dihydrodiol dehydrogenase (270 aa).

Phenylalanine 10–alanine 34 is a binding site for NAD(+). Serine 143 is a binding site for substrate. Catalysis depends on tyrosine 156, which acts as the Proton acceptor.

Belongs to the short-chain dehydrogenases/reductases (SDR) family.

The catalysed reaction is 3-(cis-5,6-dihydroxycyclohexa-1,3-dien-1-yl)propanoate + NAD(+) = 3-(2,3-dihydroxyphenyl)propanoate + NADH + H(+). It catalyses the reaction (2E)-3-(cis-5,6-dihydroxycyclohexa-1,3-dien-1-yl)prop-2-enoate + NAD(+) = (2E)-3-(2,3-dihydroxyphenyl)prop-2-enoate + NADH + H(+). It participates in aromatic compound metabolism; 3-phenylpropanoate degradation. In terms of biological role, converts 3-phenylpropionate-dihydrodiol (PP-dihydrodiol) and cinnamic acid-dihydrodiol (CI-dihydrodiol) into 3-(2,3-dihydroxylphenyl)propanoic acid (DHPP) and 2,3-dihydroxicinnamic acid (DHCI), respectively. In Escherichia coli O17:K52:H18 (strain UMN026 / ExPEC), this protein is 3-phenylpropionate-dihydrodiol/cinnamic acid-dihydrodiol dehydrogenase.